Reading from the N-terminus, the 80-residue chain is SPI-1 type 3 secretion system needle filament protein (80 aa).

This sequence belongs to the SctF family. As to quaternary structure, the core secretion machinery of the T3SS is composed of approximately 20 different proteins, including cytoplasmic components, a base, an export apparatus and a needle. This subunit polymerizes and forms the helical needle filament. Interacts with the needle tip protein SipD/SctA. Interacts with the needle adapter protein PrgJ/SctI, the secretin InvG/SctC and the minor export apparatus protein SpaP/SctR. In vitro, the needle protomer refolds spontaneously to extend the needle from the distal end.

Its subcellular location is the secreted. The protein resides in the cell surface. Binding of bile salts, including deoxycholate, to the PrgI:SipD interface may inhibit the T3SS function. Component of the type III secretion system (T3SS), also called injectisome, which is used to inject bacterial effector proteins into eukaryotic host cells. PrgI/SctF1 forms the external needle filament that protrudes from the bacterial surface. Is probably involved in the transduction of an activating signal, thought to be mediated by the distal tip of the needle filament, to the secretion machine. Required for invasion of epithelial cells. Required for the secretion of the effector protein SptP. In terms of biological role, during infection, can induce innate immune responses. The needle proteins interact with host TLR2 or TLR4, and induce signaling by NF-kappa-B and/or AP-1. This activation is MyD88 dependent and results in increased expression of cytokines, including TNF-alpha, IL-6 and IL-8. The polypeptide is SPI-1 type 3 secretion system needle filament protein (Salmonella typhimurium (strain LT2 / SGSC1412 / ATCC 700720)).